A 140-amino-acid chain; its full sequence is MQKSTPPEDLSRLTLLGREAKPSRKLETFPNRHPDRDYIVTMETAEFTCVCPMTGQPDFADLHISYIPDASILESKSLKLYLWSYRNEGIFHEHVTNVILEDVVAALSPRWCKVTANFGVRGGISITVEAEYKKPGWSKP.

The active-site Thioimide intermediate is the C51. The active-site Proton donor is the D58. Residues 73–75 (LES) and 92–93 (HE) contribute to the substrate site.

Belongs to the GTP cyclohydrolase I family. QueF type 1 subfamily.

It is found in the cytoplasm. The catalysed reaction is 7-aminomethyl-7-carbaguanine + 2 NADP(+) = 7-cyano-7-deazaguanine + 2 NADPH + 3 H(+). The protein operates within tRNA modification; tRNA-queuosine biosynthesis. Functionally, catalyzes the NADPH-dependent reduction of 7-cyano-7-deazaguanine (preQ0) to 7-aminomethyl-7-deazaguanine (preQ1). The polypeptide is NADPH-dependent 7-cyano-7-deazaguanine reductase (Syntrophus aciditrophicus (strain SB)).